The sequence spans 424 residues: MAKQIQAIRGMNDILPTQSPIWQKLETVLRETVSAYGYSEIRTPIVESTDLFKRSIGEVTDIVEKEMYTFDDRNGDSLTLRPEGTASTVRAGNEHGLLYNQEQRLWYMGPMFRHERPQKGRYRQFHQFGVEVYGIPSADIDAEVLMLSAMLWEKLGITEHVTLELNTLGDSEERAAYRDALIAFLEQHKDVLDEDSQRRMYSNPLRVLDSKNAAVQALLADAPALMDYLGEETRSHFSHLCELLEAVGIQYTINPRLVRGLDYYNRTVFEWVTSSLGSQGTVLAGGRYDGLVGQLGGKSTPAVGFAMGLERIVLLLQTLELDKDIKPAVDVYVTAMGDSCRVEAIKVAQDLRASLPNLKVMSHCGGGNFKKQMKRADKSGAAVALVIGEDELANNQVAVKYLREDKAQELVARDALATYIAELV.

Belongs to the class-II aminoacyl-tRNA synthetase family. As to quaternary structure, homodimer.

It localises to the cytoplasm. It carries out the reaction tRNA(His) + L-histidine + ATP = L-histidyl-tRNA(His) + AMP + diphosphate + H(+). The sequence is that of Histidine--tRNA ligase from Shewanella piezotolerans (strain WP3 / JCM 13877).